Here is a 563-residue protein sequence, read N- to C-terminus: MGLQARFLGLLALVIAGKCTHSPEPDQRWMLPPGWVSLGRVDPEEELSLTFALKQQNLDRLSELVQAVSDPSSPRYGKYLTLEDVAELVQPSPLTLRTVQKWLLAAGARDCHSVTTQDFLTCWLSVRQAELLLPGAEFHRYVGGPAKTHIIRSPHPYQLPQALAPHVDLVAGLHRFPPLSSPRQRPEPQGVGPVGLHLGVTPSVLRQRYNLTARDVGSGTTNNSQACAQFLEQYFHNSDLTEFMRLFGSSFAHQASVARVVGKQGRGRAGIEASLDVEYLMSAGANISTWVYSSPGRHEAQEPFLQWLLLLSNESSLPHVHTVSYGDDEDSLSSVYIQRVNTEFMKAAARGLTLLFASGDTGAGCWSVSGRHKFRPSFPASSPYVTTVGGTSFKNPFLVTNEVVDYISGGGFSNVFPQPSYQEEAVAQFLKSSSHLPPSSYFNASGRAYPDVAALSDGYWVVSNMVPIPWVSGTSASTPVFGGILSLINEHRLLNGRPPLGFLNPRLYQQHGAGLFDVTHGCHESCLNEEVEGQGFCSGPGWDPVTGWGTPNFPALLKTLLNP.

An N-terminal signal peptide occupies residues 1-19; that stretch reads MGLQARFLGLLALVIAGKC. A propeptide spans 20–195 (removed in mature form); sequence THSPEPDQRW…PEPQGVGPVG (176 aa). A disulfide bridge links cysteine 111 with cysteine 122. Residues 199–563 enclose the Peptidase S53 domain; the sequence is GVTPSVLRQR…PALLKTLLNP (365 aa). Asparagine 210 and asparagine 222 each carry an N-linked (GlcNAc...) asparagine glycan. Residues glutamate 272 and aspartate 276 each act as charge relay system in the active site. Residues asparagine 286, asparagine 313, and asparagine 443 are each glycosylated (N-linked (GlcNAc...) asparagine). 2 cysteine pairs are disulfide-bonded: cysteine 365/cysteine 526 and cysteine 522/cysteine 537. Serine 475 (charge relay system) is an active-site residue. Ca(2+) is bound by residues aspartate 517 and valine 518. Glycine 539, glycine 541, and aspartate 543 together coordinate Ca(2+).

As to quaternary structure, monomer. Interacts with CLN5. Interacts with CLN3. It depends on Ca(2+) as a cofactor. In terms of processing, activated by autocatalytic proteolytical processing upon acidification. N-glycosylation is required for processing and activity.

It is found in the lysosome. The protein resides in the melanosome. It carries out the reaction Release of an N-terminal tripeptide from a polypeptide, but also has endopeptidase activity.. Functionally, lysosomal serine protease with tripeptidyl-peptidase I activity. May act as a non-specific lysosomal peptidase which generates tripeptides from the breakdown products produced by lysosomal proteinases. Requires substrates with an unsubstituted N-terminus. The protein is Tripeptidyl-peptidase 1 (Tpp1) of Rattus norvegicus (Rat).